A 713-amino-acid chain; its full sequence is Cyclomaltodextrin glucanotransferase (713 aa).

An N-terminal signal peptide occupies residues 1–27 (MKKFLKSTAALALGLSLTFGLFSPAQA). The A1 stretch occupies residues 28–165 (APDTSVSNKQ…NIKVIIDFAP (138 aa)). Ca(2+) contacts are provided by D54, N56, N59, and N60. Cysteines 70 and 77 form a disulfide. The Ca(2+) site is built by G78 and D80. Substrate is bound at residue 127–128 (YW). N166 serves as a coordination point for Ca(2+). Residues 166–229 (NHTSPASSDQ…NLYDLADLNH (64 aa)) form a b region. Substrate is bound by residues H167 and 172–174 (SSD). I217 serves as a coordination point for Ca(2+). A substrate-binding site is contributed by 220–223 (NLYD). Residue D226 coordinates Ca(2+). Residues 230 to 433 (NNSTVDVYLK…LRKCNPAIAY (204 aa)) are A2. R254 is a substrate binding site. The active-site Nucleophile is D256. 259 to 260 (KH) contributes to the substrate binding site. A Ca(2+)-binding site is contributed by H260. The Proton donor role is filled by E284. A342 provides a ligand contact to Ca(2+). Positions 354, 398, and 402 each coordinate substrate. Residues 434-522 (GSTQERWINN…GTAVWQYTAA (89 aa)) are c. Residues 523-609 (TATPTIGHVG…SNVYDNFEVL (87 aa)) form a d region. The IPT/TIG domain occupies 526–607 (PTIGHVGPMM…TASNVYDNFE (82 aa)). Residue D604 coordinates Ca(2+). Residues 608-713 (VLSGDQVSVR…TATINVNWQP (106 aa)) form the CBM20 domain. An e region spans residues 610 to 713 (SGDQVSVRFV…TATINVNWQP (104 aa)).

Belongs to the glycosyl hydrolase 13 family. As to quaternary structure, monomer. Requires Ca(2+) as cofactor.

It is found in the secreted. It catalyses the reaction Cyclizes part of a (1-&gt;4)-alpha-D-glucan chain by formation of a (1-&gt;4)-alpha-D-glucosidic bond.. The chain is Cyclomaltodextrin glucanotransferase (cgt) from Niallia circulans (Bacillus circulans).